Consider the following 37-residue polypeptide: Large ribosomal subunit protein bL36c (37 aa).

This sequence belongs to the bacterial ribosomal protein bL36 family.

The protein localises to the plastid. It is found in the cyanelle. This is Large ribosomal subunit protein bL36c (rpl36) from Cyanophora paradoxa.